A 316-amino-acid polypeptide reads, in one-letter code: 4-hydroxy-3-methylbut-2-enyl diphosphate reductase (316 aa).

Cysteine 12 contacts [4Fe-4S] cluster. (2E)-4-hydroxy-3-methylbut-2-enyl diphosphate-binding residues include histidine 41 and histidine 74. Histidine 41 and histidine 74 together coordinate dimethylallyl diphosphate. Isopentenyl diphosphate contacts are provided by histidine 41 and histidine 74. Cysteine 96 is a binding site for [4Fe-4S] cluster. Histidine 124 is a (2E)-4-hydroxy-3-methylbut-2-enyl diphosphate binding site. Histidine 124 lines the dimethylallyl diphosphate pocket. Histidine 124 is an isopentenyl diphosphate binding site. Catalysis depends on glutamate 126, which acts as the Proton donor. Position 169 (threonine 169) interacts with (2E)-4-hydroxy-3-methylbut-2-enyl diphosphate. Residue cysteine 199 coordinates [4Fe-4S] cluster. Positions 227, 228, 229, and 271 each coordinate (2E)-4-hydroxy-3-methylbut-2-enyl diphosphate. Dimethylallyl diphosphate is bound by residues serine 227, serine 228, asparagine 229, and serine 271. The isopentenyl diphosphate site is built by serine 227, serine 228, asparagine 229, and serine 271.

It belongs to the IspH family. [4Fe-4S] cluster is required as a cofactor.

It catalyses the reaction isopentenyl diphosphate + 2 oxidized [2Fe-2S]-[ferredoxin] + H2O = (2E)-4-hydroxy-3-methylbut-2-enyl diphosphate + 2 reduced [2Fe-2S]-[ferredoxin] + 2 H(+). The enzyme catalyses dimethylallyl diphosphate + 2 oxidized [2Fe-2S]-[ferredoxin] + H2O = (2E)-4-hydroxy-3-methylbut-2-enyl diphosphate + 2 reduced [2Fe-2S]-[ferredoxin] + 2 H(+). The protein operates within isoprenoid biosynthesis; dimethylallyl diphosphate biosynthesis; dimethylallyl diphosphate from (2E)-4-hydroxy-3-methylbutenyl diphosphate: step 1/1. Its pathway is isoprenoid biosynthesis; isopentenyl diphosphate biosynthesis via DXP pathway; isopentenyl diphosphate from 1-deoxy-D-xylulose 5-phosphate: step 6/6. Functionally, catalyzes the conversion of 1-hydroxy-2-methyl-2-(E)-butenyl 4-diphosphate (HMBPP) into a mixture of isopentenyl diphosphate (IPP) and dimethylallyl diphosphate (DMAPP). Acts in the terminal step of the DOXP/MEP pathway for isoprenoid precursor biosynthesis. This Xylella fastidiosa (strain M12) protein is 4-hydroxy-3-methylbut-2-enyl diphosphate reductase.